Reading from the N-terminus, the 201-residue chain is Sorting nexin-10 (201 aa).

The interval 8-125 (EEFVSVWVRD…SLHLFLQSHL (118 aa)) is required for interaction with ATP6V1D. The region spanning 10–127 (FVSVWVRDPR…HLFLQSHLNS (118 aa)) is the PX domain. Residues arginine 53, lysine 79, and arginine 94 each contribute to the a 1,2-diacyl-sn-glycero-3-phospho-(1D-myo-inositol-3-phosphate) site. Residues 156 to 201 (FPEEDEEGKKENDIDYDSESSSSGLGHSSDDSSSHGCKVNTAPQES) form a disordered region.

It belongs to the sorting nexin family. Interacts with ATP6V1D; may play a role in ciliogenesis.

It is found in the cytoplasm. The protein localises to the endosome membrane. It localises to the cytoskeleton. The protein resides in the microtubule organizing center. Its subcellular location is the centrosome. Functionally, probable phosphoinositide-binding protein involved in protein sorting and membrane trafficking in endosomes. Plays a role in cilium biogenesis through regulation of the transport and the localization of proteins to the cilium. Required for the localization to the cilium of V-ATPase subunit ATP6V1D and ATP6V0D1, and RAB8A. Involved in osteoclast differentiation and therefore bone resorption. In Homo sapiens (Human), this protein is Sorting nexin-10 (SNX10).